A 432-amino-acid polypeptide reads, in one-letter code: Adenylosuccinate synthetase (432 aa).

GTP-binding positions include 12 to 18 (GDEGKGK) and 40 to 42 (GHT). Asp13 acts as the Proton acceptor in catalysis. The Mg(2+) site is built by Asp13 and Gly40. IMP is bound by residues 13 to 16 (DEGK), 38 to 41 (NAGH), Thr132, Arg146, Gln226, Thr241, and Arg305. The active-site Proton donor is His41. Position 301 to 307 (301 to 307 (VVTGRKR)) interacts with substrate. Residues Arg307, 333 to 335 (KLD), and 415 to 417 (STS) each bind GTP.

Belongs to the adenylosuccinate synthetase family. In terms of assembly, homodimer. Mg(2+) is required as a cofactor.

It is found in the cytoplasm. It catalyses the reaction IMP + L-aspartate + GTP = N(6)-(1,2-dicarboxyethyl)-AMP + GDP + phosphate + 2 H(+). It participates in purine metabolism; AMP biosynthesis via de novo pathway; AMP from IMP: step 1/2. In terms of biological role, plays an important role in the de novo pathway of purine nucleotide biosynthesis. Catalyzes the first committed step in the biosynthesis of AMP from IMP. The protein is Adenylosuccinate synthetase of Rhizobium leguminosarum bv. trifolii (strain WSM2304).